The following is an 850-amino-acid chain: Protein stoned-A (850 aa).

Residues 1–16 are compositionally biased toward basic residues; the sequence is MLKLPKGLKKKKKKSK. Disordered stretches follow at residues 1-95 and 125-164; these read MLKL…AAGG and KESF…LGQI. The segment at 26–290 is interaction with Syt; sequence ELEQYKRDLK…QNLLLSESIE (265 aa). Basic and acidic residues predominate over residues 28 to 38; sequence EQYKRDLKAKQ. Residues 78-91 are compositionally biased toward polar residues; that stretch reads ILNAQQQLSDQNQG. Over residues 136–164 the composition is skewed to basic and acidic residues; it reads AEKKKQKEEEAARLEAEQQEREKQRLGQI. The short motif at 224 to 226 is the DPF 1 element; sequence DPF. Disordered regions lie at residues 345-375 and 412-498; these read EEEE…EEDD and GSWA…PPFL. Pro residues predominate over residues 431-440; sequence PPPPVRPPTG. The span at 451 to 462 shows a compositional bias: acidic residues; that stretch reads SEDEEENPEDDP. 2 consecutive short sequence motifs (DPF) follow at residues 461 to 463 and 535 to 537; these read DPF. Disordered regions lie at residues 573–610, 634–673, 738–760, and 800–825; these read HSLS…QRKS, GNEL…TSHV, RKKL…FDTS, and LGLG…IDPF. Composition is skewed to basic and acidic residues over residues 574–588 and 596–607; these read SLSD…DQKE and LEQKETDFDTAQ. 3 consecutive short sequence motifs (DPF) follow at residues 666–668, 755–757, and 823–825; these read DPF.

As to quaternary structure, interacts with the second C2 domain of Syt.

It is found in the cytoplasm. It localises to the synapse. The protein localises to the cytoplasmic vesicle. The protein resides in the secretory vesicle. Its subcellular location is the synaptic vesicle. Adapter protein involved in endocytic recycling of synaptic vesicles membranes. May act by mediating the retrieval of synaptotagmin protein Syt from the plasma membrane, thereby facilitating the internalization of multiple synaptic vesicles from the plasma membrane. The protein is Protein stoned-A (stnA) of Drosophila melanogaster (Fruit fly).